The chain runs to 322 residues: AB hydrolase superfamily protein FGSG_00044 (322 aa).

In terms of domain architecture, AB hydrolase-1 spans 36–319; sequence RTTPKQPVAI…ITAEVRRIVK (284 aa).

The protein belongs to the AB hydrolase superfamily.

Its pathway is mycotoxin biosynthesis. Its function is as follows. AB hydrolase superfamily protein; part of the gene cluster that mediates the biosynthesis of gramillins A and B, bicyclic lipopeptides that induce cell death in maize leaves but not in wheat leaves. The nonribosomal peptide synthetase GRA1 incorporates respectively a glutamic adic (Glu), a leucine (Leu), a serine (Ser), a hydroxyglutamine (HOGln), a 2-amino decanoic acid, and 2 cysteins (CysB and CysA). The biosynthesis of 2-amino decanoic acid incorporated in gramillins could be initiated by a fatty acid synthase composed of the alpha and beta subunits FGSG_00036 and FGSG_11656. The cytochrome P450 monooxygenase FGSG_15680 could hydroxylate the fatty acid chain. Subsequent oxidation to the ketone by the oxidoreductase FGSG_00048 and transamination by aminotransferase FGSG_00049 could form 2-amino-decanoic acid. On the other hand, FGSG_15680 could also be responsible for the HO-modified glutamine at the gamma-position. Whether hydroxylation occurs on the fully assembled product or on the Gln residue prior to assembly into the gramillins requires further proof. The thioredoxin FGSG_00043 could also be required for the disulfide-bond formation between CysA and CysB. The specific involvement of the remaining proteins from the cluster is more difficult to discern, but could have broader regulatory (FGSG_00040 and FGSG_11657) or enzymatic functions (FGSG_00044 and FGSG_00045). The final C-domain of GRA1 does not possess the expected sequence of a termination CT domain, often implicated in macrocyclization and release of a cyclopeptidein fungal NRPs; and the thioesterase FGSG_00047 may act in concert with the terminal C-domain of GRA1 to catalyze the formation of the macrocyclic anhydride and release of the products. In Gibberella zeae (strain ATCC MYA-4620 / CBS 123657 / FGSC 9075 / NRRL 31084 / PH-1) (Wheat head blight fungus), this protein is AB hydrolase superfamily protein FGSG_00044.